Consider the following 532-residue polypeptide: Telomerase Cajal body protein 1 (532 aa).

The segment at 1–53 is disordered; it reads MKTSEERLLAPDSLPPDLAPAPVPQGSPAEKNTDFEPVPPPCGGDDQPQLATD. The segment covering 13 to 25 has biased composition (pro residues); it reads SLPPDLAPAPVPQ. A phosphoserine mark is found at S27, S61, and S83. The segment at 80–122 is disordered; it reads SELSPGIEEQDVSEHASLPGEETNLPELESGEATEGVSEERAE. 6 WD repeats span residues 151–190, 206–251, 256–297, 307–348, 349–389, and 395–434; these read RSEN…YSEQ, EGDT…LRAS, NHLD…RDCE, GQSG…ALLG, GHQG…HLLW, and VTTN…SDDS. Residue T474 is modified to Phosphothreonine. S476 carries the phosphoserine modification. The interval 510 to 532 is disordered; sequence DPSSPVDDQDEKGQRRTEAVGMS. A compositionally biased stretch (basic and acidic residues) spans 520–532; that stretch reads EKGQRRTEAVGMS.

It belongs to the TCAB1 family. In terms of assembly, component of the telomerase holoenzyme complex composed of one molecule of TERT, one molecule of WRAP53/TCAB1, two molecules of H/ACA ribonucleoprotein complex subunits DKC1, NOP10, NHP2 and GAR1, and a telomerase RNA template component (TERC). The telomerase holoenzyme complex is associated with TEP1, SMG6/EST1A and POT1. Interacts with the chaperonin-containing T-complex (TRiC) complex; which mediates the folding of WRAP53/TCAB1. Interacts with COIL. Interacts with SMN1. Interacts with RNF8. Interacts with histone H2AX. Phosphorylated at Ser-61 by ATM in response to DNA damage, promoting its interaction with histone H2AX and localization to sites of DNA double-strand breaks.

It localises to the nucleus. The protein localises to the cajal body. It is found in the chromosome. The protein resides in the telomere. Functionally, RNA chaperone that plays a key role in telomere maintenance and RNA localization to Cajal bodies. Specifically recognizes and binds the Cajal body box (CAB box) present in both small Cajal body RNAs (scaRNAs) and telomerase RNA template component (TERC). Essential component of the telomerase holoenzyme complex, a ribonucleoprotein complex essential for the replication of chromosome termini that elongates telomeres in most eukaryotes. In the telomerase holoenzyme complex, required to stimulate the catalytic activity of the complex. Acts by specifically binding the CAB box of the TERC RNA and controlling the folding of the CR4/CR5 region of the TERC RNA, a critical step for telomerase activity. In addition, also controls telomerase holoenzyme complex localization to Cajal body. During S phase, required for delivery of TERC to telomeres during S phase and for telomerase activity. In addition to its role in telomere maintenance, also required for Cajal body formation, probably by mediating localization of scaRNAs to Cajal bodies. Also plays a role in DNA repair: phosphorylated by ATM in response to DNA damage and relocalizes to sites of DNA double-strand breaks to promote the repair of DNA double-strand breaks. Acts by recruiting the ubiquitin ligase RNF8 to DNA breaks and promote both homologous recombination (HR) and non-homologous end joining (NHEJ). This chain is Telomerase Cajal body protein 1, found in Mus musculus (Mouse).